A 304-amino-acid polypeptide reads, in one-letter code: Glutaminase (304 aa).

7 residues coordinate substrate: S63, N114, E158, N165, Y189, Y240, and V258.

This sequence belongs to the glutaminase family. Homotetramer.

The enzyme catalyses L-glutamine + H2O = L-glutamate + NH4(+). In Shewanella baltica (strain OS223), this protein is Glutaminase.